A 333-amino-acid chain; its full sequence is 4-hydroxyproline 2-epimerase (333 aa).

The Proton acceptor role is filled by cysteine 90. Substrate-binding positions include 91–92 (GH), histidine 223, and aspartate 249. Catalysis depends on cysteine 253, which acts as the Proton donor. 254-255 (GT) provides a ligand contact to substrate.

It belongs to the proline racemase family.

It carries out the reaction trans-4-hydroxy-L-proline = cis-4-hydroxy-D-proline. Functionally, catalyzes the epimerization of trans-4-hydroxy-L-proline (t4LHyp) to cis-4-hydroxy-D-proline (c4DHyp). May be involved in a degradation pathway of t4LHyp, which would allow S.novella to grow on t4LHyp as a sole carbon source. The chain is 4-hydroxyproline 2-epimerase from Ancylobacter novellus (strain ATCC 8093 / DSM 506 / JCM 20403 / CCM 1077 / IAM 12100 / NBRC 12443 / NCIMB 10456) (Starkeya novella).